We begin with the raw amino-acid sequence, 163 residues long: NADH-quinone oxidoreductase subunit I (163 aa).

4Fe-4S ferredoxin-type domains lie at L53–G83 and V94–N123. Positions 63, 66, 69, 73, 103, 106, 109, and 113 each coordinate [4Fe-4S] cluster.

The protein belongs to the complex I 23 kDa subunit family. NDH-1 is composed of 14 different subunits. Subunits NuoA, H, J, K, L, M, N constitute the membrane sector of the complex. [4Fe-4S] cluster is required as a cofactor.

Its subcellular location is the cell inner membrane. It carries out the reaction a quinone + NADH + 5 H(+)(in) = a quinol + NAD(+) + 4 H(+)(out). Its function is as follows. NDH-1 shuttles electrons from NADH, via FMN and iron-sulfur (Fe-S) centers, to quinones in the respiratory chain. The immediate electron acceptor for the enzyme in this species is believed to be ubiquinone. Couples the redox reaction to proton translocation (for every two electrons transferred, four hydrogen ions are translocated across the cytoplasmic membrane), and thus conserves the redox energy in a proton gradient. This is NADH-quinone oxidoreductase subunit I from Chelativorans sp. (strain BNC1).